A 274-amino-acid chain; its full sequence is Probable formate transporter (274 aa).

7 consecutive transmembrane segments (helical) span residues 31-51 (IVLS…AEVV), 62-82 (AGLV…LVVI), 118-138 (VFNL…TGIL), 176-196 (AFWR…LAIA), 200-220 (IIGK…IGFE), 226-246 (MFFI…FFMN), and 248-268 (LIPV…CLYW).

This sequence belongs to the FNT transporter (TC 1.A.16) family.

The protein resides in the cell membrane. In terms of biological role, may act as a formate transporter. This is Probable formate transporter (fdhC) from Methanothermobacter thermautotrophicus (Methanobacterium thermoformicicum).